Consider the following 236-residue polypeptide: Large ribosomal subunit protein uL1 (236 aa).

It belongs to the universal ribosomal protein uL1 family. As to quaternary structure, part of the 50S ribosomal subunit.

Its function is as follows. Binds directly to 23S rRNA. The L1 stalk is quite mobile in the ribosome, and is involved in E site tRNA release. Functionally, protein L1 is also a translational repressor protein, it controls the translation of the L11 operon by binding to its mRNA. This Sorangium cellulosum (strain So ce56) (Polyangium cellulosum (strain So ce56)) protein is Large ribosomal subunit protein uL1.